Consider the following 297-residue polypeptide: Carbamate kinase (297 aa).

Belongs to the carbamate kinase family.

It localises to the cytoplasm. The enzyme catalyses hydrogencarbonate + NH4(+) + ATP = carbamoyl phosphate + ADP + H2O + H(+). The catalysed reaction is carbamate + ATP = carbamoyl phosphate + ADP. It catalyses the reaction hydrogencarbonate + NH4(+) = carbamate + H2O + H(+). It functions in the pathway nitrogen metabolism; (S)-allantoin degradation. Kinase involved in the anaerobic nitrogen utilization via the assimilation of allantoin. Catalyzes the transfer of a phosphate group from carbamoyl phosphate to ADP to produce ATP and leave carbamate, which spontaneously hydrolyzes to ammonia and hydrogencarbonate. The chain is Carbamate kinase from Escherichia coli O157:H7.